The sequence spans 3068 residues: Highly reducing polyketide synthase 17 (3068 aa).

Positions 100–526 (IEPIAIVGAS…GTNAHAIMER (427 aa)) constitute a Ketosynthase family 3 (KS3) domain. Catalysis depends on for beta-ketoacyl synthase activity residues Cys274, His410, and His449. Residues 627–938 (YVFTGQGAQW…LAGPIRQCLA (312 aa)) form a malonyl-CoA:ACP transacylase (MAT) domain region. The active-site For malonyltransferase activity is the Ser721. The segment at 1027-1160 (HHLLGVRMTE…GVVEGVMTLD (134 aa)) is N-terminal hotdog fold. Residues 1027–1311 (HHLLGVRMTE…RASNIDMTIV (285 aa)) are dehydratase (DH) domain. The PKS/mFAS DH domain occupies 1027 to 1334 (HHLLGVRMTE…SRSLAAHVDG (308 aa)). The active-site Proton acceptor; for dehydratase activity is the His1059. Residues 1179–1334 (NRTMVIPEEL…SRSLAAHVDG (156 aa)) are C-terminal hotdog fold. Catalysis depends on Asp1247, which acts as the Proton donor; for dehydratase activity. An enoylreductase (ER) domain region spans residues 1735-2037 (LGPVQSSKGD…LVRQGGKVIL (303 aa)). The catalytic ketoreductase (KR) domain stretch occupies residues 2062 to 2240 (AAYVVAGGMG…FLSMNIGWIE (179 aa)). The region spanning 2345–2423 (TIIDFISSAI…DLAEKVASRS (79 aa)) is the Carrier domain. Ser2383 is subject to O-(pantetheine 4'-phosphoryl)serine. The segment at 2831-3062 (FDVASLGLRS…SCMITSLLED (232 aa)) is choline/carnitine acyltransferase (cAT) domain.

Its pathway is secondary metabolite biosynthesis. In terms of biological role, highly reducing polyketide synthase; part of the gene cluster that mediates the biosynthesis of (2Z,4E,6E,10E)-9-hydroxydodeca-2,4,6,10-tetraenoic acid (BAA), (2E,4E,6E,10E)-9-hydroxydodeca-2,4,6,10-tetraenoic acid (BAB), and (2Z,4E,6E)-octa-2,4,6-trienedioic acid (PBA). The highly reducing polyketide synthase Ba17a is sufficent to produce PBA and BAA. The still to be characterized protein Ba17b leads to an increased production of BAA as well as to the production of the new compound BAB. BAA does not possess insecticidal activity against G.mellonella larvae, however, both BAA and BAB increase the growth of Candida albicans and BAA can mitigate the fungicidal effects of fluconazole over C.albicans, suggesting that generalist pathogens such as M.anisopliae, can potentially manipulate the yeast microbiota found in arthropods (and anywhere else) by the activity of compounds as BAA and BAB. The sequence is that of Highly reducing polyketide synthase 17 from Metarhizium anisopliae (Entomophthora anisopliae).